The following is a 70-amino-acid chain: Toxin Isom2 (70 aa).

Residues 2-65 (KNGYAVDSSG…ISDTRKKYCD (64 aa)) enclose the LCN-type CS-alpha/beta domain. Disulfide bonds link cysteine 16-cysteine 37, cysteine 22-cysteine 42, cysteine 26-cysteine 44, and cysteine 38-cysteine 64.

As to expression, expressed by the venom gland.

The protein resides in the secreted. Excitatory insect beta-toxins induce a spastic paralysis. They bind voltage-independently at site-4 of sodium channels (Nav) and shift the voltage of activation toward more negative potentials thereby affecting sodium channel activation and promoting spontaneous and repetitive firing. In Isometrus vittatus (Bark scorpion), this protein is Toxin Isom2.